A 359-amino-acid chain; its full sequence is Peptide chain release factor 1 (359 aa).

The residue at position 235 (glutamine 235) is an N5-methylglutamine. Over residues 282–307 the composition is skewed to basic and acidic residues; the sequence is RQRADSERSADRKSQVGSGDRSERIR. The tract at residues 282 to 309 is disordered; that stretch reads RQRADSERSADRKSQVGSGDRSERIRTY.

The protein belongs to the prokaryotic/mitochondrial release factor family. In terms of processing, methylated by PrmC. Methylation increases the termination efficiency of RF1.

Its subcellular location is the cytoplasm. Its function is as follows. Peptide chain release factor 1 directs the termination of translation in response to the peptide chain termination codons UAG and UAA. The chain is Peptide chain release factor 1 from Allorhizobium ampelinum (strain ATCC BAA-846 / DSM 112012 / S4) (Agrobacterium vitis (strain S4)).